The following is a 57-amino-acid chain: Large ribosomal subunit protein bL33 (57 aa).

It belongs to the bacterial ribosomal protein bL33 family.

In Shewanella denitrificans (strain OS217 / ATCC BAA-1090 / DSM 15013), this protein is Large ribosomal subunit protein bL33.